We begin with the raw amino-acid sequence, 1404 residues long: DNA-directed RNA polymerase subunit beta' (1404 aa).

Zn(2+) contacts are provided by C60, C62, C75, and C78. Positions 449, 451, and 453 each coordinate Mg(2+). Residues C778, C852, C859, and C862 each contribute to the Zn(2+) site. A disordered region spans residues 1381 to 1404; the sequence is DRPLEEEEEEEIPQSIADDSDGDE. Acidic residues predominate over residues 1384-1404; the sequence is LEEEEEEEIPQSIADDSDGDE.

It belongs to the RNA polymerase beta' chain family. The RNAP catalytic core consists of 2 alpha, 1 beta, 1 beta' and 1 omega subunit. When a sigma factor is associated with the core the holoenzyme is formed, which can initiate transcription. Requires Mg(2+) as cofactor. Zn(2+) serves as cofactor.

It catalyses the reaction RNA(n) + a ribonucleoside 5'-triphosphate = RNA(n+1) + diphosphate. Functionally, DNA-dependent RNA polymerase catalyzes the transcription of DNA into RNA using the four ribonucleoside triphosphates as substrates. The chain is DNA-directed RNA polymerase subunit beta' from Leptospira borgpetersenii serovar Hardjo-bovis (strain L550).